A 152-amino-acid chain; its full sequence is Glycine cleavage system H protein, mitochondrial (152 aa).

The N-terminal 31 residues, 1-31 (MALRMWASSTANALRLSSATRPHYSPLSRCF), are a transit peptide targeting the mitochondrion. The region spanning 53-135 (VATVGITDHA…YEDGWMIKVK (83 aa)) is the Lipoyl-binding domain. N6-lipoyllysine is present on K94.

Belongs to the GcvH family. As to quaternary structure, the glycine cleavage system is composed of four proteins: P, T, L and H. Requires (R)-lipoate as cofactor.

Its subcellular location is the mitochondrion. Functionally, the glycine cleavage system catalyzes the degradation of glycine. The H protein shuttles the methylamine group of glycine from the P protein to the T protein. The protein is Glycine cleavage system H protein, mitochondrial (GDCSH) of Flaveria pubescens (Yellowtops).